We begin with the raw amino-acid sequence, 385 residues long: Aspartate/prephenate aminotransferase (385 aa).

L-aspartate contacts are provided by G39, W125, and N175. K234 is subject to N6-(pyridoxal phosphate)lysine. R361 lines the L-aspartate pocket.

The protein belongs to the class-I pyridoxal-phosphate-dependent aminotransferase family. In terms of assembly, homodimer. Requires pyridoxal 5'-phosphate as cofactor.

It is found in the cytoplasm. It catalyses the reaction L-aspartate + 2-oxoglutarate = oxaloacetate + L-glutamate. It carries out the reaction L-arogenate + oxaloacetate = prephenate + L-aspartate. Functionally, catalyzes the reversible conversion of aspartate and 2-oxoglutarate to glutamate and oxaloacetate. Can also transaminate prephenate in the presence of aspartate. The chain is Aspartate/prephenate aminotransferase (aspC) from Thermus thermophilus (strain ATCC 27634 / DSM 579 / HB8).